The following is a 199-amino-acid chain: Large ribosomal subunit protein bL25 (199 aa).

The protein belongs to the bacterial ribosomal protein bL25 family. CTC subfamily. As to quaternary structure, part of the 50S ribosomal subunit; part of the 5S rRNA/L5/L18/L25 subcomplex. Contacts the 5S rRNA. Binds to the 5S rRNA independently of L5 and L18.

In terms of biological role, this is one of the proteins that binds to the 5S RNA in the ribosome where it forms part of the central protuberance. The protein is Large ribosomal subunit protein bL25 of Chlorobaculum tepidum (strain ATCC 49652 / DSM 12025 / NBRC 103806 / TLS) (Chlorobium tepidum).